The following is a 283-amino-acid chain: Pantothenate synthetase (283 aa).

M30–H37 is a binding site for ATP. The active-site Proton donor is the H37. Q61 is a (R)-pantoate binding site. Q61 is a beta-alanine binding site. G147–D150 contributes to the ATP binding site. Residue Q153 participates in (R)-pantoate binding. Residues V176 and M184–R187 contribute to the ATP site.

Belongs to the pantothenate synthetase family. In terms of assembly, homodimer.

It is found in the cytoplasm. The catalysed reaction is (R)-pantoate + beta-alanine + ATP = (R)-pantothenate + AMP + diphosphate + H(+). It functions in the pathway cofactor biosynthesis; (R)-pantothenate biosynthesis; (R)-pantothenate from (R)-pantoate and beta-alanine: step 1/1. Functionally, catalyzes the condensation of pantoate with beta-alanine in an ATP-dependent reaction via a pantoyl-adenylate intermediate. The sequence is that of Pantothenate synthetase from Desulforapulum autotrophicum (strain ATCC 43914 / DSM 3382 / VKM B-1955 / HRM2) (Desulfobacterium autotrophicum).